The chain runs to 192 residues: MKRYIVGISGASGAILAVTLVSELARLGHHVDVIISPAAQKTLYYELETKSFLATIPSNLHKNILIHRITSIESSLSSGSTLVDATIIVPCSVATIAAISCGLSDNLLRRVADVALKEKRPLILVPRETPLSAIHLENLLKLAQNGAVILPPMPTWYFRPETANDIANDIVGKILAILQLDSPLIKRWENPH.

FMN contacts are provided by residues 10 to 12 (GAS), serine 36, 92 to 95 (SVAT), and arginine 127. Positions 157 and 173 each coordinate dimethylallyl phosphate.

The protein belongs to the UbiX/PAD1 family.

The enzyme catalyses dimethylallyl phosphate + FMNH2 = prenylated FMNH2 + phosphate. In terms of biological role, flavin prenyltransferase that catalyzes the synthesis of the prenylated FMN cofactor (prenyl-FMN) for 4-hydroxy-3-polyprenylbenzoic acid decarboxylase UbiD. The prenyltransferase is metal-independent and links a dimethylallyl moiety from dimethylallyl monophosphate (DMAP) to the flavin N5 and C6 atoms of FMN. The sequence is that of Flavin prenyltransferase UbiX from Chlamydia muridarum (strain MoPn / Nigg).